Consider the following 396-residue polypeptide: Tryptophan synthase beta chain (396 aa).

An N6-(pyridoxal phosphate)lysine modification is found at K86.

It belongs to the TrpB family. In terms of assembly, tetramer of two alpha and two beta chains. Pyridoxal 5'-phosphate serves as cofactor.

The enzyme catalyses (1S,2R)-1-C-(indol-3-yl)glycerol 3-phosphate + L-serine = D-glyceraldehyde 3-phosphate + L-tryptophan + H2O. It participates in amino-acid biosynthesis; L-tryptophan biosynthesis; L-tryptophan from chorismate: step 5/5. In terms of biological role, the beta subunit is responsible for the synthesis of L-tryptophan from indole and L-serine. This is Tryptophan synthase beta chain from Aliivibrio fischeri (strain MJ11) (Vibrio fischeri).